Consider the following 200-residue polypeptide: MVDLRIPAALKLGPKLKRSFFARSVHEVAPDLIGATLLVEGSGGVIVEVEAYHHTDPAAHSFGGQTPRNAVMFGPPGVAYVYRSYGIHWCLNVVCEEAGSASAVLIRALVPTDGLALMRRRRGVEDERALCSGPGKLAQALGVTIAHNGLKLDAPPFALHGRLAAPEIVAGPRIGISKAAELPWRYGLRGSKFVSKPFAE.

The protein belongs to the DNA glycosylase MPG family.

The polypeptide is Putative 3-methyladenine DNA glycosylase (Rhodopseudomonas palustris (strain BisB18)).